We begin with the raw amino-acid sequence, 1575 residues long: Laminin subunit gamma-3 (1575 aa).

An N-terminal signal peptide occupies residues 1-19 (MAAAALLLGLALLAPRAAG). One can recognise a Laminin N-terminal domain in the interval 31 to 270 (RPQRCLPVFE…AVSDFSVGGR (240 aa)). 2 N-linked (GlcNAc...) asparagine glycosylation sites follow: Asn-87 and Asn-119. 16 disulfides stabilise this stretch: Cys-271/Cys-280, Cys-273/Cys-290, Cys-292/Cys-301, Cys-304/Cys-324, Cys-327/Cys-336, Cys-329/Cys-352, Cys-355/Cys-364, Cys-367/Cys-380, Cys-383/Cys-395, Cys-385/Cys-401, Cys-403/Cys-412, Cys-415/Cys-427, Cys-430/Cys-441, Cys-432/Cys-448, Cys-450/Cys-459, and Cys-462/Cys-477. Laminin EGF-like domains follow at residues 271 to 326 (CKCN…ECLP), 327 to 382 (CNCS…PCQP), 383 to 429 (CDCQ…GCRP), and 430 to 479 (CTCN…GCSS). Asn-295 carries N-linked (GlcNAc...) asparagine glycosylation. An N-linked (GlcNAc...) asparagine glycan is attached at Asn-328. Positions 480–489 (CFCYGHSKVC) constitute a Laminin EGF-like 5; first part domain. The Laminin IV type A domain occupies 499–672 (HILSDFHQGA…LSPPASWVEI (174 aa)). An N-linked (GlcNAc...) asparagine glycan is attached at Asn-631. Residues 673–706 (CSCPTGYTGQFCESCAPGYKREMPQGGPYASCVP) enclose the Laminin EGF-like 5; second part domain. Cystine bridges form between Cys-707–Cys-715, Cys-709–Cys-722, Cys-724–Cys-733, Cys-736–Cys-752, Cys-755–Cys-763, Cys-757–Cys-774, Cys-777–Cys-786, Cys-789–Cys-807, Cys-810–Cys-824, Cys-812–Cys-831, Cys-834–Cys-843, Cys-846–Cys-863, Cys-866–Cys-880, Cys-868–Cys-887, Cys-889–Cys-898, Cys-901–Cys-914, Cys-917–Cys-929, Cys-919–Cys-936, Cys-938–Cys-947, Cys-950–Cys-962, Cys-965–Cys-977, Cys-967–Cys-983, Cys-985–Cys-994, and Cys-997–Cys-1010. Laminin EGF-like domains lie at 707-754 (CTCN…DCQP), 755-809 (CPCP…PCHQ), 810-865 (CQCS…KCMP), 866-916 (CSCH…GCRS), 917-964 (CKCH…GCRA), and 965-1013 (CRCS…CQQC). Asn-837 carries an N-linked (GlcNAc...) asparagine glycan. Asn-980 is a glycosylation site (N-linked (GlcNAc...) asparagine). A domain II and I region spans residues 1014–1575 (PSCYALVKEE…SLPENCASWQ (562 aa)). The short motif at 1059-1061 (RGD) is the Cell attachment site element. A coiled-coil region spans residues 1073 to 1134 (REAFLEQMMS…SEEEILHAAA (62 aa)). Asn-1185 carries an N-linked (GlcNAc...) asparagine glycan. A coiled-coil region spans residues 1201-1228 (LETQRDLEDRYQEVQAAQKALRTAVAEV). The disordered stretch occupies residues 1378–1399 (KQAERMLGNAAPLSSSAKKKGR). Coiled-coil stretches lie at residues 1410-1492 (KLAK…LARL) and 1523-1567 (GSLQ…LHSL).

Laminin is a complex glycoprotein, consisting of three different polypeptide chains (alpha, beta, gamma), which are bound to each other by disulfide bonds into a cross-shaped molecule comprising one long and three short arms with globules at each end. Gamma-3 is a subunit of laminin-12 (laminin-213), laminin-14 (laminin-423) and laminin-15 (laminin-523). Broadly expressed in: skin, heart, lung, and the reproductive tracts.

The protein resides in the secreted. It localises to the extracellular space. The protein localises to the extracellular matrix. Its subcellular location is the basement membrane. In terms of biological role, binding to cells via a high affinity receptor, laminin is thought to mediate the attachment, migration and organization of cells into tissues during embryonic development by interacting with other extracellular matrix components. The chain is Laminin subunit gamma-3 (LAMC3) from Homo sapiens (Human).